A 341-amino-acid polypeptide reads, in one-letter code: UDP-glucose 4-epimerase (341 aa).

Belongs to the polysaccharide synthase family.

It catalyses the reaction UDP-alpha-D-glucose = UDP-alpha-D-galactose. Its function is as follows. Epimerizes UDP-galactose to UDP-glucose. The protein is UDP-glucose 4-epimerase (capD) of Rickettsia conorii (strain ATCC VR-613 / Malish 7).